Consider the following 76-residue polypeptide: Conotoxin TsMLCL-03 (76 aa).

Positions 1-19 are cleaved as a signal peptide; sequence MLCLPVFIILLLLASPAAP. The propeptide occupies 20–44; the sequence is NPLERRIQSDLIRTALEDADMKTPK.

This sequence belongs to the conotoxin T superfamily. Contains 2 disulfide bonds that can be either 'C1-C3, C2-C4' or 'C1-C4, C2-C3', since these disulfide connectivities have been observed for conotoxins with cysteine framework V (for examples, see AC P0DQQ7 and AC P81755). In terms of tissue distribution, expressed by the venom duct.

Its subcellular location is the secreted. This Conus tessulatus (Tessellate cone) protein is Conotoxin TsMLCL-03.